Here is a 142-residue protein sequence, read N- to C-terminus: Probable transport accessory protein MmpS5 (142 aa).

Residues 7–26 form a helical membrane-spanning segment; that stretch reads RAWIPLLILVVVAIAGFTVQ.

This sequence belongs to the MmpS family.

Its subcellular location is the cell membrane. The chain is Probable transport accessory protein MmpS5 (mmpS5) from Mycobacterium bovis (strain ATCC BAA-935 / AF2122/97).